A 799-amino-acid chain; its full sequence is E3 UFM1-protein ligase 1 homolog (799 aa).

Positions 429–483 (TTTTTTTQPSKKKDNLINSDDDDNQDNNKKSSKGKNKKSKQQQSSIQKLINDSED) are disordered. A compositionally biased stretch (basic residues) spans 458 to 468 (KSSKGKNKKSK). Low complexity predominate over residues 469–478 (QQQSSIQKLI).

This sequence belongs to the UFL1 family.

E3 UFM1-protein ligase that mediates ufmylation of target proteins. This chain is E3 UFM1-protein ligase 1 homolog, found in Dictyostelium discoideum (Social amoeba).